A 228-amino-acid chain; its full sequence is Hematopoietically-expressed homeobox protein hhex (228 aa).

Positions 117 to 176 (RKGGQVRFSNDQTIELEKKFETQKYLSPPERKRLAKMLQLSERQVKTWFQNRRAKWRRLK) form a DNA-binding region, homeobox. Residues 175 to 228 (LKQENPPSTGKREAEDSDTRRLSDAAARARELESGASTDSEELLDIEDEHQFTL) form a disordered region. Over residues 184–207 (GKREAEDSDTRRLSDAAARARELE) the composition is skewed to basic and acidic residues. Positions 213–222 (DSEELLDIED) are enriched in acidic residues.

Expressed in embryonic endothelial and blood lineages. From late-blastula stage, expression is restricted to the dorsal marginal region of the extraembryonic yolk syncytial layer (YSL). By the onset of gastrulation, expressed in the entire dorsal half of the YSL. Post-gastrulation, expression appears in both anterior and posterior lateral plate mesoderm by the 3-somite stage. Posteriorly, expression is in the intermediate cell mass (ICM), which contains both endothelial and blood precursors. Subsequently expressed in the developing endothelial cells including the endocardium until the onset of circulation (24 hpf) and disappears completely by 30 hpf, at which point expression is seen in the thyroid and liver primordia. Also expressed in the developing biliary tree and pancreas.

It localises to the nucleus. Functionally, recognizes the DNA sequence 5'-ATTAA-3'. Transcriptional repressor. Regulates the differentiation of both endothelial and blood cells. Plays a role in embryonic dorsoventral patterning by regulating bmp expression. May establish anterior identity. Functions in the embryo to regulate liver development. Functions extraembryonically to generate organ chirality. The chain is Hematopoietically-expressed homeobox protein hhex from Danio rerio (Zebrafish).